A 673-amino-acid chain; its full sequence is Annexin A6 (673 aa).

Ala-2 is subject to N-acetylalanine. Ser-13 is modified (phosphoserine). Annexin repeat units follow at residues 20–91, 92–163, 175–247, 251–322, 363–434, 435–506, 521–595, and 599–670; these read FDAN…NLMR, PLAY…VLLQ, DLVQ…AVVK, STPE…KLCG, FNPD…GLMM, PPAH…SLAT, EDAQ…AIVQ, and NKPL…ALCG. Residue Tyr-30 is modified to Phosphotyrosine. N6-acetyllysine occurs at positions 63, 68, 75, and 81. Tyr-201 is modified (phosphotyrosine). Lys-306, Lys-370, and Lys-418 each carry N6-acetyllysine. Ser-422 carries the phosphoserine modification. Residue Lys-483 is modified to N6-acetyllysine. Ser-537 is subject to Phosphoserine. The residue at position 620 (Lys-620) is an N6-acetyllysine.

The protein belongs to the annexin family.

Its subcellular location is the cytoplasm. The protein localises to the melanosome. Functionally, may associate with CD21. May regulate the release of Ca(2+) from intracellular stores. This chain is Annexin A6 (Anxa6), found in Mus musculus (Mouse).